The chain runs to 119 residues: Large ribosomal subunit protein uL22 (119 aa).

Belongs to the universal ribosomal protein uL22 family. In terms of assembly, part of the 50S ribosomal subunit.

In terms of biological role, this protein binds specifically to 23S rRNA; its binding is stimulated by other ribosomal proteins, e.g. L4, L17, and L20. It is important during the early stages of 50S assembly. It makes multiple contacts with different domains of the 23S rRNA in the assembled 50S subunit and ribosome. Its function is as follows. The globular domain of the protein is located near the polypeptide exit tunnel on the outside of the subunit, while an extended beta-hairpin is found that lines the wall of the exit tunnel in the center of the 70S ribosome. The polypeptide is Large ribosomal subunit protein uL22 (Rickettsia felis (strain ATCC VR-1525 / URRWXCal2) (Rickettsia azadi)).